We begin with the raw amino-acid sequence, 176 residues long: Variant surface antigen A (176 aa).

The first 29 residues, 1–29, serve as a signal peptide directing secretion; sequence MKKSIFSKKLLVSFGSLVALAAIPLIAIS. A lipid anchor (N-palmitoyl cysteine) is attached at Cys-30. Cys-30 carries the S-diacylglycerol cysteine lipid modification. Positions 33–176 are disordered; sequence TDNNSSQSQQ…TKTENTQHTS (144 aa). Over residues 35 to 121 the composition is skewed to low complexity; sequence NNSSQSQQPG…GSNSESGMNS (87 aa). The stretch at 123–135 is repeat 1; that stretch reads KTENTQQSEAPGT. The tract at residues 123–176 is 2.5 X 13 AA repeats; sequence KTENTQQSEAPGTNTGNKTTSESNSESGMNSEKTENTQQSEAPGTKTENTQHTS. Residues 126–142 show a composition bias toward polar residues; the sequence is NTQQSEAPGTNTGNKTT. Residues 143-153 are compositionally biased toward low complexity; sequence SESNSESGMNS. Residues 155–167 form repeat 2; that stretch reads KTENTQQSEAPGT. A compositionally biased stretch (polar residues) spans 158–176; that stretch reads NTQQSEAPGTKTENTQHTS. The 3; truncated repeat unit spans residues 168–176; it reads KTENTQHTS.

The protein resides in the cell membrane. Functionally, responsible for the antigenic diversity for host adaptation. This is Variant surface antigen A (vlpA) from Mesomycoplasma hyorhinis (Mycoplasma hyorhinis).